A 290-amino-acid chain; its full sequence is Shikimate dehydrogenase (NADP(+)) (290 aa).

Shikimate contacts are provided by residues 22 to 24 (SLS) and Thr68. The Proton acceptor role is filled by Lys72. Shikimate is bound by residues Asn93 and Asp108. NADP(+) is bound by residues 133-137 (GSGGS) and Ile228. Tyr230 lines the shikimate pocket. Residue Gly251 participates in NADP(+) binding.

This sequence belongs to the shikimate dehydrogenase family. Homodimer.

It carries out the reaction shikimate + NADP(+) = 3-dehydroshikimate + NADPH + H(+). It functions in the pathway metabolic intermediate biosynthesis; chorismate biosynthesis; chorismate from D-erythrose 4-phosphate and phosphoenolpyruvate: step 4/7. Its function is as follows. Involved in the biosynthesis of the chorismate, which leads to the biosynthesis of aromatic amino acids. Catalyzes the reversible NADPH linked reduction of 3-dehydroshikimate (DHSA) to yield shikimate (SA). This Leptospira borgpetersenii serovar Hardjo-bovis (strain JB197) protein is Shikimate dehydrogenase (NADP(+)).